A 249-amino-acid polypeptide reads, in one-letter code: NAD kinase (249 aa).

Aspartate 49 (proton acceptor) is an active-site residue. NAD(+) is bound by residues 49-50 (DG), arginine 54, 115-116 (NE), lysine 126, arginine 143, aspartate 145, isoleucine 153, 156-161 (TGYAFS), alanine 180, and glutamine 211.

This sequence belongs to the NAD kinase family. In terms of assembly, homotetramer. The cofactor is a divalent metal cation.

It is found in the cytoplasm. The catalysed reaction is NAD(+) + ATP = ADP + NADP(+) + H(+). In terms of biological role, involved in the regulation of the intracellular balance between NAD(H) and NADP(H), and is a key enzyme in the biosynthesis of NADP. Catalyzes specifically the phosphorylation on 2'-hydroxyl of the adenosine moiety of NAD to yield NADP. The polypeptide is NAD kinase (Archaeoglobus fulgidus (strain ATCC 49558 / DSM 4304 / JCM 9628 / NBRC 100126 / VC-16)).